A 234-amino-acid polypeptide reads, in one-letter code: UPF0758 protein Smlt0399 (234 aa).

Residues 103–225 (VGNNPAAVGR…PVSFAERGLL (123 aa)) enclose the MPN domain. Zn(2+) is bound by residues His-174, His-176, and Asp-187. The short motif at 174-187 (HNHPSGDPEPSSAD) is the JAMM motif element.

The protein belongs to the UPF0758 family.

The protein is UPF0758 protein Smlt0399 of Stenotrophomonas maltophilia (strain K279a).